Here is a 652-residue protein sequence, read N- to C-terminus: Cleavage and polyadenylation specificity factor subunit 6 (652 aa).

The segment at 20–85 (QAQDEFGGDG…GVYHQSSGSL (66 aa)) is disordered. In terms of domain architecture, RRM spans 93-173 (YQLYVGNLTW…QAPVVTYPSK (81 aa)). 2 disordered regions span residues 184 to 440 (KTRP…QQMG) and 518 to 652 (SYNR…RSRH). Residues 187–203 (PVPPPQQNGPPRGPAPP) are compositionally biased toward pro residues. Gly residues predominate over residues 205 to 223 (MGGGPMPTGHPGGPQGGGP). Pro residues-rich tracts occupy residues 256 to 266 (SGPPRMQPPMH), 295 to 307 (GPRPGPPNGPPQR), and 338 to 352 (PQGPPRGLPPAPGPG). Residues 391–406 (PGMNMPPQQGMNMTPQ) are compositionally biased toward low complexity. The segment covering 420–435 (GPWPPPQGKPPGPFPD) has biased composition (pro residues). The segment covering 518-528 (SYNRRERSRSR) has biased composition (basic and acidic residues). Residues 529 to 538 (ERSHRSRQRR) are compositionally biased toward basic residues. The segment covering 539–590 (ERSTSRYRERSRERERDRDRERERDGGSYRERSRSRERERQAPDHYRDDSRS) has biased composition (basic and acidic residues). Serine 596 bears the Phosphoserine mark. Residues 598–610 (EPVVAEAAEAPSS) show a composition bias toward low complexity. Residues 612–652 (RYYEDRERYRSSDRERRDRDRDRDRERERDRDRREEHRSRH) are compositionally biased toward basic and acidic residues.

This sequence belongs to the RRM CPSF6/7 family.

It localises to the nucleus. Its function is as follows. May play a role in pre-mRNA 3'-processing. This Drosophila melanogaster (Fruit fly) protein is Cleavage and polyadenylation specificity factor subunit 6.